The primary structure comprises 983 residues: Inner tegument protein (983 aa).

Positions 474–983 (LNVNTHFAVQ…TSVSLPPASP (510 aa)) are interaction with large tegument protein. Residues 901–932 (APWESAPQPPRLRMTPDTDHEESTAGATSVPE) are disordered. Basic and acidic residues predominate over residues 914–923 (MTPDTDHEES).

Belongs to the herpesviridae inner tegument protein family. In terms of assembly, interacts (via C-terminus) with the large tegument protein/LTP (via N-terminus).

The protein resides in the virion tegument. It is found in the host cytoplasm. It localises to the host nucleus. Its subcellular location is the host Golgi apparatus. The protein localises to the host trans-Golgi network. Functionally, plays an essential role in cytoplasmic secondary envelopment during viral egress. Interacts with the capsid via the large tegument protein/LTP and participates in its transport to the host trans-Golgi network (TGN) where secondary envelopment occurs. Modulates tegumentation and capsid accumulation at the viral assembly complex. The sequence is that of Inner tegument protein (UL47) from Homo sapiens (Human).